The following is a 530-amino-acid chain: Portal protein B (530 aa).

This sequence belongs to the siphoviridae portal protein family. As to quaternary structure, homododecamer. Interacts with the terminase complex composed of two small and one large terminase subunits. Post-translationally, proteolytically cleaved by the viral protease during capsid maturation.

It is found in the virion. Functionally, forms the portal vertex of the capsid. This portal plays critical roles in head assembly, genome packaging, neck/tail attachment, and genome ejection. The portal protein multimerizes as a single ring-shaped homododecamer arranged around a central channel. Binds to the terminase subunits to form the packaging machine. The polypeptide is Portal protein B (Enterobacteria phage P21 (Bacteriophage 21)).